A 496-amino-acid chain; its full sequence is Cytochrome P450 monooxygenase ausR (496 aa).

The chain crosses the membrane as a helical span at residues 12 to 32; sequence IGLYILWTIPVLFVIFKLLAP. Cysteine 435 serves as a coordination point for heme.

Belongs to the cytochrome P450 family. The cofactor is heme.

It localises to the membrane. It functions in the pathway secondary metabolite biosynthesis; terpenoid biosynthesis. Cytochrome P450 monooxygenase; part of the gene cluster B that mediates the biosynthesis of the fungal meroterpenoid acetoxydehydroaustin. The first step of the pathway is the synthesis of 3,5-dimethylorsellinic acid by the polyketide synthase ausA. 3,5-dimethylorsellinic acid is then prenylated by the polyprenyl transferase ausN. Further epoxidation by the FAD-dependent monooxygenase ausM and cyclization by the probable terpene cyclase ausL lead to the formation of protoaustinoid A. Protoaustinoid A is then oxidized to spiro-lactone preaustinoid A3 by the combined action of the FAD-binding monooxygenases ausB and ausC, and the dioxygenase ausE. Acid-catalyzed keto-rearrangement and ring contraction of the tetraketide portion of preaustinoid A3 by ausJ lead to the formation of preaustinoid A4. The aldo-keto reductase ausK, with the help of ausH, is involved in the next step by transforming preaustinoid A4 into isoaustinone which is in turn hydroxylated by the P450 monooxygenase ausI to form austinolide. The cytochrome P450 monooxygenase ausG then modifies austinolide to austinol. Austinol is further acetylated to austin by the O-acetyltransferase ausP, which spontaneously changes to dehydroaustin. The cytochrome P450 monooxygenase then converts dehydroaustin is into 7-dehydrodehydroaustin. The hydroxylation catalyzed by ausR permits the second O-acetyltransferase ausQ to add an additional acetyl group to the molecule, leading to the formation of acetoxydehydroaustin. Due to genetic rearrangements of the clusters and the subsequent loss of some enzymes, the end product of the Penicillium brasilianum austinoid biosynthesis clusters is acetoxydehydroaustin. The polypeptide is Cytochrome P450 monooxygenase ausR (Penicillium brasilianum).